The following is a 97-amino-acid chain: Small ribosomal subunit protein bS20 (97 aa).

The protein belongs to the bacterial ribosomal protein bS20 family.

Functionally, binds directly to 16S ribosomal RNA. The polypeptide is Small ribosomal subunit protein bS20 (Prochlorococcus marinus (strain AS9601)).